Consider the following 261-residue polypeptide: Adenosylcobinamide-GDP ribazoletransferase (261 aa).

7 helical membrane-spanning segments follow: residues 4-26, 40-60, 62-82, 110-130, 140-160, 197-217, and 237-257; these read GLNG…QIPW, LTGL…SPFL, PLVL…GLHL, VGAF…LLLM, FTWL…VQLI, CFLL…IWLF, and IGAS…TFFL.

Belongs to the CobS family. The cofactor is Mg(2+).

Its subcellular location is the cell membrane. The catalysed reaction is alpha-ribazole + adenosylcob(III)inamide-GDP = adenosylcob(III)alamin + GMP + H(+). The enzyme catalyses alpha-ribazole 5'-phosphate + adenosylcob(III)inamide-GDP = adenosylcob(III)alamin 5'-phosphate + GMP + H(+). The protein operates within cofactor biosynthesis; adenosylcobalamin biosynthesis; adenosylcobalamin from cob(II)yrinate a,c-diamide: step 7/7. Functionally, joins adenosylcobinamide-GDP and alpha-ribazole to generate adenosylcobalamin (Ado-cobalamin). Also synthesizes adenosylcobalamin 5'-phosphate from adenosylcobinamide-GDP and alpha-ribazole 5'-phosphate. This chain is Adenosylcobinamide-GDP ribazoletransferase, found in Halalkalibacterium halodurans (strain ATCC BAA-125 / DSM 18197 / FERM 7344 / JCM 9153 / C-125) (Bacillus halodurans).